The chain runs to 389 residues: Succinate--CoA ligase [ADP-forming] subunit beta (389 aa).

The ATP-grasp domain occupies 9 to 244; sequence KQLLAEYGIP…KTQEDETEVT (236 aa). Residues K46, 53–55, G102, and E107 each bind ATP; that span reads GRG. Positions 199 and 213 each coordinate Mg(2+). Substrate is bound by residues N264 and 321 to 323; that span reads GIV.

It belongs to the succinate/malate CoA ligase beta subunit family. In terms of assembly, heterotetramer of two alpha and two beta subunits. It depends on Mg(2+) as a cofactor.

It catalyses the reaction succinate + ATP + CoA = succinyl-CoA + ADP + phosphate. The catalysed reaction is GTP + succinate + CoA = succinyl-CoA + GDP + phosphate. It functions in the pathway carbohydrate metabolism; tricarboxylic acid cycle; succinate from succinyl-CoA (ligase route): step 1/1. In terms of biological role, succinyl-CoA synthetase functions in the citric acid cycle (TCA), coupling the hydrolysis of succinyl-CoA to the synthesis of either ATP or GTP and thus represents the only step of substrate-level phosphorylation in the TCA. The beta subunit provides nucleotide specificity of the enzyme and binds the substrate succinate, while the binding sites for coenzyme A and phosphate are found in the alpha subunit. This chain is Succinate--CoA ligase [ADP-forming] subunit beta, found in Xanthomonas oryzae pv. oryzae (strain MAFF 311018).